The chain runs to 265 residues: O-methyltransferase NEC2 (265 aa).

This sequence belongs to the methyltransferase superfamily.

The catalysed reaction is desmethylnectriapyrone + S-adenosyl-L-methionine = nectriapyrone + S-adenosyl-L-homocysteine + H(+). Functionally, O-methyltransferase; part of the gene cluster that mediates the biosynthesis of nectriapyrone and its analogs phomopyrone A, acropyrone and zaepyrone. The nectriapyrone biosynthetic gene cluster consists of two genes, the highly reducing polyketide synthase NEC1 that produces a demethylated analog of nectriapyrone from one unit of acetyl-CoA and one unit of malonyl-CoA; and the O-methyltransferase NEC2 that further methylates the NEC1 product to yield nectriapyrone. Nectriapyrone is further hydrolyzed to nectriapyrone D, also known as gulypyrone B, by an unidentified hydrolase localized outside the nectriapyrone cluster. In Pyricularia oryzae (strain 70-15 / ATCC MYA-4617 / FGSC 8958) (Rice blast fungus), this protein is O-methyltransferase NEC2.